Reading from the N-terminus, the 351-residue chain is Photosystem II D2 protein (351 aa).

Residues 39–59 (CSYLALGGWLTGTTFVTSWYT) form a helical membrane-spanning segment. His116 contacts chlorophyll a. The chain crosses the membrane as a helical span at residues 123-139 (GFCLRQFEIARLVGIRP). Residues Gln128 and Asn141 each contribute to the pheophytin a site. The helical transmembrane segment at 151 to 164 (VFVSVFLMYPLGQA) threads the bilayer. Chlorophyll a is bound at residue His196. A helical transmembrane segment spans residues 206 to 226 (GALLCAIHGATVQNTLFEDGD). Positions 213 and 260 each coordinate a plastoquinone. Residue His213 coordinates Fe cation. His267 contributes to the Fe cation binding site. The helical transmembrane segment at 277-293 (GLWTSAFGIVGLALNLR) threads the bilayer.

It belongs to the reaction center PufL/M/PsbA/D family. In terms of assembly, PSII is composed of 1 copy each of membrane proteins PsbA, PsbB, PsbC, PsbD, PsbE, PsbF, PsbH, PsbI, PsbJ, PsbK, PsbL, PsbM, PsbT, PsbX, PsbY, PsbZ, Psb30/Ycf12, at least 3 peripheral proteins of the oxygen-evolving complex and a large number of cofactors. It forms dimeric complexes. The cofactor is The D1/D2 heterodimer binds P680, chlorophylls that are the primary electron donor of PSII, and subsequent electron acceptors. It shares a non-heme iron and each subunit binds pheophytin, quinone, additional chlorophylls, carotenoids and lipids. There is also a Cl(-1) ion associated with D1 and D2, which is required for oxygen evolution. The PSII complex binds additional chlorophylls, carotenoids and specific lipids..

The protein localises to the plastid. It is found in the chloroplast thylakoid membrane. The catalysed reaction is 2 a plastoquinone + 4 hnu + 2 H2O = 2 a plastoquinol + O2. Photosystem II (PSII) is a light-driven water:plastoquinone oxidoreductase that uses light energy to abstract electrons from H(2)O, generating O(2) and a proton gradient subsequently used for ATP formation. It consists of a core antenna complex that captures photons, and an electron transfer chain that converts photonic excitation into a charge separation. The D1/D2 (PsbA/PsbD) reaction center heterodimer binds P680, the primary electron donor of PSII as well as several subsequent electron acceptors. D2 is needed for assembly of a stable PSII complex. The chain is Photosystem II D2 protein from Gracilaria tenuistipitata var. liui (Red alga).